We begin with the raw amino-acid sequence, 72 residues long: Protein CYSTEINE-RICH TRANSMEMBRANE MODULE 1 (72 aa).

Positions 1-11 (MSQYDHNQSAG) are enriched in polar residues. The interval 1 to 46 (MSQYDHNQSAGANPPPPMSTCTSPPPPIGYPTNQPSHGSVAQGKVE) is disordered. Pro residues predominate over residues 13 to 29 (NPPPPMSTCTSPPPPIG). Residues 49–65 (SKGDGFFKGCLAAMCCC) form a helical membrane-spanning segment.

This sequence belongs to the CYSTM1 family. In terms of assembly, heterodimers. Binds weakly to CYSTM7 and WIH1/CYSTM13. Mostly expressed in roots, flowers and siliques and, to a lower extent, in stems and leaves.

The protein localises to the cell membrane. It is found in the nucleus. May be involved in aluminium (Al) tolerance. Involved in resistance to abiotic stress. This is Protein CYSTEINE-RICH TRANSMEMBRANE MODULE 1 from Arabidopsis thaliana (Mouse-ear cress).